The primary structure comprises 406 residues: Nicotinate phosphoribosyltransferase (406 aa).

At His227 the chain carries Phosphohistidine; by autocatalysis.

It belongs to the NAPRTase family. In terms of processing, transiently phosphorylated on a His residue during the reaction cycle. Phosphorylation strongly increases the affinity for substrates and increases the rate of nicotinate D-ribonucleotide production. Dephosphorylation regenerates the low-affinity form of the enzyme, leading to product release.

It carries out the reaction nicotinate + 5-phospho-alpha-D-ribose 1-diphosphate + ATP + H2O = nicotinate beta-D-ribonucleotide + ADP + phosphate + diphosphate. Its pathway is cofactor biosynthesis; NAD(+) biosynthesis; nicotinate D-ribonucleotide from nicotinate: step 1/1. Functionally, catalyzes the synthesis of beta-nicotinate D-ribonucleotide from nicotinate and 5-phospho-D-ribose 1-phosphate at the expense of ATP. This Methanosarcina mazei (strain ATCC BAA-159 / DSM 3647 / Goe1 / Go1 / JCM 11833 / OCM 88) (Methanosarcina frisia) protein is Nicotinate phosphoribosyltransferase.